The following is a 601-amino-acid chain: Probable translation initiation factor IF-2 (601 aa).

The 216-residue stretch at 14-229 (LRTPIVAVLG…VMMGLSQRYM (216 aa)) folds into the tr-type G domain. Positions 23 to 30 (GHVDHGKT) are G1. 23–30 (GHVDHGKT) contacts GTP. Residues 48–52 (AITQH) form a G2 region. The segment at 85–88 (DTPG) is G3. GTP contacts are provided by residues 85 to 89 (DTPGH) and 139 to 142 (NKID). The segment at 139–142 (NKID) is G4. Positions 207–209 (SAE) are G5.

Belongs to the TRAFAC class translation factor GTPase superfamily. Classic translation factor GTPase family. IF-2 subfamily.

Functionally, function in general translation initiation by promoting the binding of the formylmethionine-tRNA to ribosomes. Seems to function along with eIF-2. This chain is Probable translation initiation factor IF-2, found in Haloarcula marismortui (strain ATCC 43049 / DSM 3752 / JCM 8966 / VKM B-1809) (Halobacterium marismortui).